The sequence spans 510 residues: DAP3-binding cell death enhancer 1 (510 aa).

The N-terminal 23 residues, Met-1–Ile-23, are a transit peptide targeting the mitochondrion. 2 disordered regions span residues Gly-19–Pro-61 and Val-142–Leu-185. A propeptide spans Thr-24–Gln-101 (extended MTS). The span at Thr-35 to Leu-45 shows a compositional bias: low complexity. Composition is skewed to basic and acidic residues over residues Ser-46–Pro-61 and Gly-155–Pro-167. Polar residues predominate over residues Ala-169–Arg-181. 7 TPR repeats span residues Ala-213–Val-245, Ala-246–Ser-278, Lys-279–His-313, Ser-314–Leu-351, Thr-352–Asp-385, Ser-386–Pro-423, and Ala-471–Ser-499. The short motif at Leu-307–Gln-326 is the SIFI-degron element.

Belongs to the DELE1 family. In terms of assembly, interacts with DAP3. Interacts (via TPR repeats) with EIF2AK1/HRI; activating the protein kinase activity of EIF2AK1/HRI, thereby promoting the integrated stress response (ISR). As to quaternary structure, homooctamer; oligomerization is required to activate EIF2AK1/HRI. Interacts (via TPR repeats) with EIF2AK1/HRI; activating the protein kinase activity of EIF2AK1/HRI, thereby promoting the integrated stress response (ISR). Unstable protein in absence of stress: imported in the mitochondrial matrix following processing by the mitochondrial-processing peptidase (MPP), where it is degraded by LONP1. Stabilized in response to iron deficiency: iron deficiency impairs mitochondrial import, promoting localization at the mitochondrial surface and stabilization. Cleaved by OMA1 in response to mitochondrial stress, generating the DAP3-binding cell death enhancer 1 short form (DELE1(S) or S-DELE1) that accumulates in the cytosol and activates the protein kinase activity of EIF2AK1/HRI. Protein cleavage by OMA1 can take place at different positions, and apparently does not require a specific sequence motif. Post-translationally, ubiquitinated and degraded by the SIFI complex once the mitochondrial stress has been resolved, thereby providing stress response silencing. Within the SIFI complex, UBR4 initiates ubiquitin chain that are further elongated or branched by KCMF1.

The protein resides in the mitochondrion. Its subcellular location is the mitochondrion outer membrane. The protein localises to the mitochondrion inner membrane. It localises to the cytoplasm. It is found in the cytosol. Its function is as follows. Protein kinase activator that acts as a key activator of the integrated stress response (ISR) following various stresses, such as iron deficiency, mitochondrial stress or mitochondrial DNA breaks. Detects impaired protein import and processing in mitochondria, activating the ISR. May also required for the induction of death receptor-mediated apoptosis through the regulation of caspase activation. Functionally, protein kinase activator that activates the ISR in response to iron deficiency: iron deficiency impairs mitochondrial import, promoting DELE1 localization at the mitochondrial surface, where it binds and activates EIF2AK1/HRI to trigger the ISR. Protein kinase activator generated by protein cleavage in response to mitochondrial stress, which accumulates in the cytosol and specifically binds to and activates the protein kinase activity of EIF2AK1/HRI. It thereby activates the integrated stress response (ISR): EIF2AK1/HRI activation promotes eIF-2-alpha (EIF2S1) phosphorylation, leading to a decrease in global protein synthesis and the induction of selected genes, including the transcription factor ATF4, the master transcriptional regulator of the ISR. Also acts as an activator of PRKN-independent mitophagy: activates the protein kinase activity of EIF2AK1/HRI in response to mitochondrial damage, promoting eIF-2-alpha (EIF2S1) phosphorylation, leading to mitochondrial localization of EIF2S1 followed by induction of mitophagy. The sequence is that of DAP3-binding cell death enhancer 1 from Mus musculus (Mouse).